A 119-amino-acid polypeptide reads, in one-letter code: Small ribosomal subunit protein uS13 (119 aa).

Positions G94–K119 are disordered.

The protein belongs to the universal ribosomal protein uS13 family. In terms of assembly, part of the 30S ribosomal subunit. Forms a loose heterodimer with protein S19. Forms two bridges to the 50S subunit in the 70S ribosome.

Located at the top of the head of the 30S subunit, it contacts several helices of the 16S rRNA. In the 70S ribosome it contacts the 23S rRNA (bridge B1a) and protein L5 of the 50S subunit (bridge B1b), connecting the 2 subunits; these bridges are implicated in subunit movement. Contacts the tRNAs in the A and P-sites. In Alkalilimnicola ehrlichii (strain ATCC BAA-1101 / DSM 17681 / MLHE-1), this protein is Small ribosomal subunit protein uS13.